The following is a 240-amino-acid chain: Pyridoxine 5'-phosphate synthase (240 aa).

Asparagine 7 is a 3-amino-2-oxopropyl phosphate binding site. 9–10 (DH) contributes to the 1-deoxy-D-xylulose 5-phosphate binding site. Position 18 (arginine 18) interacts with 3-amino-2-oxopropyl phosphate. The active-site Proton acceptor is histidine 43. 1-deoxy-D-xylulose 5-phosphate contacts are provided by arginine 45 and histidine 50. Glutamate 70 (proton acceptor) is an active-site residue. Threonine 100 contacts 1-deoxy-D-xylulose 5-phosphate. Residue histidine 191 is the Proton donor of the active site. 3-amino-2-oxopropyl phosphate-binding positions include glycine 192 and 213–214 (GH).

The protein belongs to the PNP synthase family. In terms of assembly, homooctamer; tetramer of dimers.

The protein localises to the cytoplasm. The catalysed reaction is 3-amino-2-oxopropyl phosphate + 1-deoxy-D-xylulose 5-phosphate = pyridoxine 5'-phosphate + phosphate + 2 H2O + H(+). It functions in the pathway cofactor biosynthesis; pyridoxine 5'-phosphate biosynthesis; pyridoxine 5'-phosphate from D-erythrose 4-phosphate: step 5/5. Catalyzes the complicated ring closure reaction between the two acyclic compounds 1-deoxy-D-xylulose-5-phosphate (DXP) and 3-amino-2-oxopropyl phosphate (1-amino-acetone-3-phosphate or AAP) to form pyridoxine 5'-phosphate (PNP) and inorganic phosphate. The polypeptide is Pyridoxine 5'-phosphate synthase (Trichodesmium erythraeum (strain IMS101)).